Reading from the N-terminus, the 159-residue chain is Histone H1 (159 aa).

Disordered regions lie at residues 1–31 (MAEK…ITEL), 80–99 (KGAE…KKEK), and 132–159 (AAKK…KKKS). Residues 10-22 (VTTKKPAATHRRR) show a composition bias toward basic residues. The region spanning 12-102 (TKKPAATHRR…GEGKKEKEKA (91 aa)) is the H15 domain. A compositionally biased stretch (gly residues) spans 84 to 93 (CAGGQGTGVG). The span at 134–148 (KKVKAAPKKAKKPVK) shows a compositional bias: basic residues. The span at 149–159 (KTTEKKEKKKS) shows a compositional bias: basic and acidic residues.

It belongs to the histone H1/H5 family.

It localises to the nucleus. The protein resides in the chromosome. In terms of biological role, histones H1 are necessary for the condensation of nucleosome chains into higher-order structures. In Psammechinus miliaris (Green sea urchin), this protein is Histone H1.